The sequence spans 575 residues: Suppressor of tumorigenicity 7 protein-like (575 aa).

2 helical membrane-spanning segments follow: residues 36 to 56 (GLAGTGASLWFVAGLGLLYAL) and 80 to 100 (FYVALTGTSSLISGLIFIFEW). The segment at 125–147 (GTESSISEPGSPSRNRENETSRQ) is disordered. Over residues 126 to 137 (TESSISEPGSPS) the composition is skewed to polar residues.

It belongs to the ST7 family.

It is found in the membrane. The chain is Suppressor of tumorigenicity 7 protein-like (ST7L) from Homo sapiens (Human).